We begin with the raw amino-acid sequence, 435 residues long: Cell adhesion molecule 2 (435 aa).

Residues 1-24 form the signal peptide; it reads MIWKRSAVLRFYSVCGLLLLGSQG. At 25–367 the chain is on the extracellular side; sequence QFPLTQNVTV…SLAGQNGPDH (343 aa). The region spanning 27-119 is the Ig-like V-type domain; it reads PLTQNVTVVE…PVKTSKAYLT (93 aa). Asn31 and Asn51 each carry an N-linked (GlcNAc...) asparagine glycan. Cystine bridges form between Cys44–Cys104, Cys146–Cys203, and Cys248–Cys296. 2 Ig-like C2-type domains span residues 127-219 and 227-312; these read PQIS…VAMQ and PSVK…YVLI. Residue Asn291 is glycosylated (N-linked (GlcNAc...) asparagine). Over residues 341–351 the composition is skewed to low complexity; that stretch reads TTSPSTSASSS. The interval 341 to 360 is disordered; the sequence is TTSPSTSASSSSRRDPNSLA. The helical transmembrane segment at 368 to 388 threads the bilayer; it reads ALIGGIVAVVVFVTLCSIFLL. Over 389-435 the chain is Cytoplasmic; it reads GRYLARHKGTYLTNEAKGAEDAPDADTAIINAEGSQVNAEEKKEYFI. Ser423 is subject to Phosphoserine.

Belongs to the nectin family. Glycosylation at Asn-51 reduces adhesive binding.

It localises to the cell membrane. The protein localises to the synapse. It is found in the cell projection. Its subcellular location is the axon. Its function is as follows. Adhesion molecule that engages in homo- and heterophilic interactions with the other nectin-like family members, leading to cell aggregation. Important for synapse organization, providing regulated trans-synaptic adhesion. Preferentially binds to oligodendrocytes. This Rattus norvegicus (Rat) protein is Cell adhesion molecule 2 (Cadm2).